A 953-amino-acid polypeptide reads, in one-letter code: Nonsense-mediated mRNA decay factor SMG8 (953 aa).

Disordered regions lie at residues 571–604 (AEDA…CSQP) and 629–653 (PCFD…ESNT). The segment covering 573-586 (DAELDPDEEDEELP) has biased composition (acidic residues). Residues 595–604 (ITQSNGCSQP) are compositionally biased toward polar residues. Residues 634–653 (SSSSEAESTCSGTSSEESNT) show a composition bias toward low complexity.

It belongs to the SMG8 family.

Involved in nonsense-mediated decay (NMD) of mRNAs containing premature stop codons. Probable component of kinase complex containing nonC and recruited to stalled ribosomes. The chain is Nonsense-mediated mRNA decay factor SMG8 from Drosophila pseudoobscura pseudoobscura (Fruit fly).